The sequence spans 721 residues: Long-chain-fatty-acid--CoA ligase ACSBG1 (721 aa).

The tract at residues 1-64 (MPRGSEAGYC…SHGLELSAPE (64 aa)) is disordered. Polar residues predominate over residues 26 to 52 (QQGASLGTSQDNSQTSSLIDGQTLSKE). Serine 34, serine 50, serine 53, and serine 70 each carry phosphoserine. ATP is bound by residues 279 to 287 (TSGTTGNPK), 469 to 474 (AGYGLS), aspartate 547, and arginine 562. Position 655 is a phosphotyrosine (tyrosine 655). ATP is bound at residue lysine 698.

The protein belongs to the ATP-dependent AMP-binding enzyme family. Bubblegum subfamily. In terms of tissue distribution, mainly expressed in brain. Also expressed in adrenal gland and testis. In brain, it is present in cerebral cortical and cerebellar neurons and in steroidogenic cells of the adrenal gland, testis and ovary (at protein level).

The protein localises to the cytoplasm. It localises to the cytoplasmic vesicle. Its subcellular location is the microsome. The protein resides in the endoplasmic reticulum. It is found in the cell membrane. The enzyme catalyses a long-chain fatty acid + ATP + CoA = a long-chain fatty acyl-CoA + AMP + diphosphate. The catalysed reaction is (E)-hexadec-2-enoate + ATP + CoA = (2E)-hexadecenoyl-CoA + AMP + diphosphate. It catalyses the reaction hexadecanoate + ATP + CoA = hexadecanoyl-CoA + AMP + diphosphate. Its function is as follows. Catalyzes the conversion of fatty acids such as long-chain and very long-chain fatty acids to their active form acyl-CoAs for both synthesis of cellular lipids, and degradation via beta-oxidation. Can activate diverse saturated, monosaturated and polyunsaturated fatty acids. The polypeptide is Long-chain-fatty-acid--CoA ligase ACSBG1 (Mus musculus (Mouse)).